The following is a 765-amino-acid chain: Protein transport protein Sec23A (765 aa).

Threonine 2 carries the N-acetylthreonine modification. Zn(2+) is bound by residues cysteine 61, cysteine 66, cysteine 85, and cysteine 88. Threonine 308 carries the phosphothreonine modification. The stretch at 632–718 is one Gelsolin-like repeat; sequence PEPVLLDSSS…EHGGSQARFL (87 aa).

Belongs to the SEC23/SEC24 family. SEC23 subfamily. COPII is composed of at least five proteins: the Sec23/24 complex, the Sec13/31 complex and Sar1. Interacts with SEC23IP. Interacts with HTR4. Interacts with SEC16A. Interacts with SLC6A4. Interacts (as part of the Sec23/24 complex) with SEC22B; recruits SEC22B into COPII-coated vesicles and allows the transport of this cargo from the endoplasmic reticulum to the Golgi. Interacts (via Gelsolin-like repeat) with MIA2 and MIA3; specifically involved in the transport of large cargos like the collagen COL7A1. Interacts with DDHD1. Interacts with TMEM39A. Interacts with SACM1L; this interaction is reduced in the absence of TMEM39A. Interacts with kinase FAM20C; transport of FAM20C from the endoplasmic reticulum to the Golgi is likely to be mediated by COPII vesicles. In terms of tissue distribution, high levels in brain and fibroblasts.

Its subcellular location is the cytoplasmic vesicle. It is found in the COPII-coated vesicle membrane. It localises to the endoplasmic reticulum membrane. The protein localises to the cytoplasm. The protein resides in the cytosol. Its function is as follows. Component of the coat protein complex II (COPII) which promotes the formation of transport vesicles from the endoplasmic reticulum (ER). The coat has two main functions, the physical deformation of the endoplasmic reticulum membrane into vesicles and the selection of cargo molecules for their transport to the Golgi complex. Required for the translocation of insulin-induced glucose transporter SLC2A4/GLUT4 to the cell membrane. The chain is Protein transport protein Sec23A from Mus musculus (Mouse).